Reading from the N-terminus, the 233-residue chain is Chalcone--flavanone isomerase (233 aa).

Positions 47, 113, and 192 each coordinate substrate.

Belongs to the chalcone isomerase family.

It catalyses the reaction a chalcone = a flavanone.. Its pathway is secondary metabolite biosynthesis; flavonoid biosynthesis. In terms of biological role, catalyzes the intramolecular cyclization of bicyclic chalcones into tricyclic (S)-flavanones. Responsible for the isomerization of 4,2',4',6'-tetrahydroxychalcone (also termed chalcone) into naringenin. In Oryza sativa subsp. japonica (Rice), this protein is Chalcone--flavanone isomerase (CHI).